The sequence spans 430 residues: 2-deoxy-scyllo-inosose synthase (430 aa).

NAD(+) contacts are provided by residues D42, 73 to 76 (EVHK), 105 to 109 (GVTGN), 129 to 130 (TT), 140 to 142 (SLK), and 151 to 152 (KN). K142 is a catalytic residue. E184 is a binding site for Co(2+). Residue E244 is part of the active site. Co(2+) is bound by residues H247 and H263. Residues 371–430 (RGGAGGGAAEPAAARTGPVPDGPEAAVPATPGPVPAGPAAAAPLPSGPAPTAPAAAGPVP) are disordered. Over residues 379–399 (AEPAAARTGPVPDGPEAAVPA) the composition is skewed to low complexity.

Belongs to the sugar phosphate cyclases superfamily. DOI synthase family. It depends on NAD(+) as a cofactor. Requires Co(2+) as cofactor.

It carries out the reaction D-glucose 6-phosphate = 2-deoxy-L-scyllo-inosose + phosphate. Its pathway is metabolic intermediate biosynthesis; 2-deoxystreptamine biosynthesis; 2-deoxystreptamine from D-glucose 6-phosphate: step 1/4. It functions in the pathway antibiotic biosynthesis; neomycin biosynthesis. Its function is as follows. Catalyzes the intramolecular carbocycle formation from D-glucose-6-phosphate to 2-deoxy-scyllo-inosose (DOI). This Streptomyces fradiae (Streptomyces roseoflavus) protein is 2-deoxy-scyllo-inosose synthase (neoC).